The primary structure comprises 525 residues: Vesicular inhibitory amino acid transporter (525 aa).

Residues 1 to 132 (MATLLRSKLS…WNVTNAIQGM (132 aa)) lie on the Cytoplasmic side of the membrane. The tract at residues 83–107 (IHYQRGSGAPLPPSGSKDQVGGGGE) is disordered. A helical transmembrane segment spans residues 133-153 (FVLGLPYAILHGGYLGLFLII). Residues 154-204 (FAAVVCCYTGKILIACLYEENEDGEVVRVRDSYVAIANACCAPRFPTLGGR) lie on the Lumenal, vesicle side of the membrane. Tyr-186 carries the post-translational modification 3'-nitrotyrosine. A helical membrane pass occupies residues 205–225 (VVNVAQIIELVMTCILYVVVS). The Cytoplasmic portion of the chain corresponds to 226–265 (GNLMYNSFPGLPVSQKSWSIIATAVLLPCAFLKNLKAVSK). A helical transmembrane segment spans residues 266-286 (FSLLCTLAHFVINILVIAYCL). Residues 287-305 (SRARDWAWEKVKFYIDVKK) are Lumenal, vesicle-facing. Residues 306-326 (FPISIGIIVFSYTSQIFLPSL) form a helical membrane-spanning segment. At 327-341 (EGNMQQPSEFHCMMN) the chain is on the cytoplasmic side. The chain crosses the membrane as a helical span at residues 342-362 (WTHIAACVLKGLFALVAYLTW). Residues 363–383 (ADETKEVITDNLPGSIRAVVN) are Lumenal, vesicle-facing. A helical membrane pass occupies residues 384–404 (IFLVAKALLSYPLPFFAAVEV). Residues 405–438 (LEKSLFQEGSRAFFPACYSGDGRLKSWGLTLRCA) lie on the Cytoplasmic side of the membrane. A helical transmembrane segment spans residues 439 to 459 (LVVFTLLMAIYVPHFALLMGL). The Lumenal, vesicle portion of the chain corresponds to 460 to 461 (TG). The helical transmembrane segment at 462 to 482 (SLTGAGLCFLLPSLFHLRLLW) threads the bilayer. Over 483–489 (RKLLWHQ) the chain is Cytoplasmic. A helical membrane pass occupies residues 490–510 (VFFDVAIFVIGGICSVSGFVH). The Lumenal, vesicle portion of the chain corresponds to 511–525 (SLEGLIEAYRTNAED).

This sequence belongs to the amino acid/polyamine transporter 2 family. As to expression, retina. Expressed throughout the horizontal cells or more specifically at the terminals.

It is found in the cytoplasmic vesicle membrane. It localises to the presynapse. It catalyses the reaction 4-aminobutanoate(out) + n H(+)(in) = 4-aminobutanoate(in) + n H(+)(out). The enzyme catalyses glycine(out) + n H(+)(in) = glycine(in) + n H(+)(out). It carries out the reaction beta-alanine(out) + n H(+)(in) = beta-alanine(in) + n H(+)(out). Its function is as follows. Antiporter that exchanges vesicular protons for cytosolic 4-aminobutanoate or to a lesser extend glycine, thus allowing their secretion from nerve terminals. The transport is equally dependent on the chemical and electrical components of the proton gradient. May also transport beta-alanine. Acidification of GABAergic synaptic vesicles is a prerequisite for 4-aminobutanoate uptake. The protein is Vesicular inhibitory amino acid transporter of Homo sapiens (Human).